The sequence spans 373 residues: tRNA-specific 2-thiouridylase MnmA (373 aa).

Residues 12–19 and Met-38 each bind ATP; that span reads GMSGGVDS. Residues 98-100 are interaction with target base in tRNA; the sequence is NPD. The active-site Nucleophile is Cys-103. Cys-103 and Cys-200 are disulfide-bonded. Position 127 (Gly-127) interacts with ATP. Residues 150-152 are interaction with tRNA; that stretch reads KDQ. Cys-200 acts as the Cysteine persulfide intermediate in catalysis. Residues 312-313 are interaction with tRNA; the sequence is RY.

Belongs to the MnmA/TRMU family.

The protein resides in the cytoplasm. It carries out the reaction S-sulfanyl-L-cysteinyl-[protein] + uridine(34) in tRNA + AH2 + ATP = 2-thiouridine(34) in tRNA + L-cysteinyl-[protein] + A + AMP + diphosphate + H(+). Catalyzes the 2-thiolation of uridine at the wobble position (U34) of tRNA, leading to the formation of s(2)U34. This Streptococcus pyogenes serotype M6 (strain ATCC BAA-946 / MGAS10394) protein is tRNA-specific 2-thiouridylase MnmA.